The sequence spans 454 residues: UPF0210 protein BL1209 (454 aa).

The protein belongs to the UPF0210 family. As to quaternary structure, homodimer.

The sequence is that of UPF0210 protein BL1209 from Bifidobacterium longum (strain NCC 2705).